Reading from the N-terminus, the 396-residue chain is L-lactate dehydrogenase (396 aa).

Residues 1–380 form the FMN hydroxy acid dehydrogenase domain; that stretch reads MIISAASDYR…SGDSLVQELG (380 aa). Substrate is bound at residue Tyr-24. The FMN site is built by Ser-106 and Gln-127. Tyr-129 provides a ligand contact to substrate. Residue Thr-155 coordinates FMN. Position 164 (Arg-164) interacts with substrate. Lys-251 is a binding site for FMN. His-275 (proton acceptor) is an active-site residue. Position 278 (Arg-278) interacts with substrate. 306 to 330 is a binding site for FMN; the sequence is DSGIRNGLDVVRMIALGADTVLLGR.

Belongs to the FMN-dependent alpha-hydroxy acid dehydrogenase family. The cofactor is FMN.

Its subcellular location is the cell inner membrane. The enzyme catalyses (S)-lactate + A = pyruvate + AH2. In terms of biological role, catalyzes the conversion of L-lactate to pyruvate. Is coupled to the respiratory chain. The chain is L-lactate dehydrogenase from Salmonella enteritidis PT4 (strain P125109).